Reading from the N-terminus, the 239-residue chain is Ribosomal RNA small subunit methyltransferase G (239 aa).

S-adenosyl-L-methionine contacts are provided by residues G77, F82, A128–E129, and R147. Residues K216–G239 form a disordered region.

It belongs to the methyltransferase superfamily. RNA methyltransferase RsmG family.

It localises to the cytoplasm. Specifically methylates the N7 position of guanine in position 535 of 16S rRNA. The chain is Ribosomal RNA small subunit methyltransferase G from Bacillus licheniformis (strain ATCC 14580 / DSM 13 / JCM 2505 / CCUG 7422 / NBRC 12200 / NCIMB 9375 / NCTC 10341 / NRRL NRS-1264 / Gibson 46).